A 183-amino-acid chain; its full sequence is Crossover junction endodeoxyribonuclease RuvC (183 aa).

Active-site residues include D7, E66, and D138. Residues D7, E66, and D138 each contribute to the Mg(2+) site.

The protein belongs to the RuvC family. Homodimer which binds Holliday junction (HJ) DNA. The HJ becomes 2-fold symmetrical on binding to RuvC with unstacked arms; it has a different conformation from HJ DNA in complex with RuvA. In the full resolvosome a probable DNA-RuvA(4)-RuvB(12)-RuvC(2) complex forms which resolves the HJ. The cofactor is Mg(2+).

The protein resides in the cytoplasm. It carries out the reaction Endonucleolytic cleavage at a junction such as a reciprocal single-stranded crossover between two homologous DNA duplexes (Holliday junction).. The RuvA-RuvB-RuvC complex processes Holliday junction (HJ) DNA during genetic recombination and DNA repair. Endonuclease that resolves HJ intermediates. Cleaves cruciform DNA by making single-stranded nicks across the HJ at symmetrical positions within the homologous arms, yielding a 5'-phosphate and a 3'-hydroxyl group; requires a central core of homology in the junction. The consensus cleavage sequence is 5'-(A/T)TT(C/G)-3'. Cleavage occurs on the 3'-side of the TT dinucleotide at the point of strand exchange. HJ branch migration catalyzed by RuvA-RuvB allows RuvC to scan DNA until it finds its consensus sequence, where it cleaves and resolves the cruciform DNA. This is Crossover junction endodeoxyribonuclease RuvC from Burkholderia ambifaria (strain ATCC BAA-244 / DSM 16087 / CCUG 44356 / LMG 19182 / AMMD) (Burkholderia cepacia (strain AMMD)).